A 146-amino-acid polypeptide reads, in one-letter code: Kappa-casein (146 aa).

3 O-linked (GalNAc...) threonine glycosylation sites follow: Thr-107, Thr-112, and Thr-118. A Phosphoserine modification is found at Ser-143.

It belongs to the kappa-casein family. As to expression, mammary gland specific. Secreted in milk.

Its subcellular location is the secreted. In terms of biological role, kappa-casein stabilizes micelle formation, preventing casein precipitation in milk. The sequence is that of Kappa-casein (CSN3) from Dicotyles tajacu (Collared peccary).